The sequence spans 147 residues: SPI-1 type 3 secretion system pilotin (147 aa).

The first 15 residues, 1–15, serve as a signal peptide directing secretion; sequence MKKFYSCLPVFLLIG. A lipid anchor (N-palmitoyl cysteine) is attached at cysteine 16. Cysteine 16 carries S-diacylglycerol cysteine lipidation.

This sequence belongs to the InvH family.

Its subcellular location is the cell outer membrane. Its function is as follows. Involved in the synthesis of the type III secretion system (T3SS), also called injectisome, which is used to inject bacterial effector proteins into eukaryotic host cells. Pilot protein that is required for the proper localization of the secretin InvG/SctC in the outer membrane. Necessary for efficient adherence and entry of these organisms into cultured epithelial cells. This Salmonella choleraesuis (strain SC-B67) protein is SPI-1 type 3 secretion system pilotin.